We begin with the raw amino-acid sequence, 487 residues long: Alpha-1,4-L-rhamnosidase (487 aa).

Positions 1 to 30 are cleaved as a signal peptide; it reads MKNKKRLCHILKYIITCFLFGVIFIIPIQA. The Proton donor role is filled by E199.

The protein belongs to the glycosyl hydrolase 39 family.

The protein resides in the periplasm. Its function is as follows. Alpha-rhamnosidase involved in ulvan degradation. Ulvan is the main polysaccharide component of the Ulvales (green seaweed) cell wall. It is composed of disaccharide building blocks comprising 3-sulfated rhamnose (Rha3S) linked to D-glucuronic acid (GlcA), L-iduronic acid (IduA), or D-xylose (Xyl). Endo-acting alpha-1,4-L-rhamnosidase cleaves rhamnose sections interspersed between xylose residues within the polymer, degrading larger oligomers with consecutive Xyl-Rha3S units that are resistant to the ulvan lyases and producing dimers Xyl-Rha3S and Xyl2S-Rha3S as the smallest products. The chain is Alpha-1,4-L-rhamnosidase from Formosa agariphila (strain DSM 15362 / KCTC 12365 / LMG 23005 / KMM 3901 / M-2Alg 35-1).